A 390-amino-acid polypeptide reads, in one-letter code: Transposase for insertion sequence element IS21 (390 aa).

The 62-residue stretch at 5–66 (EDFYMIKQMR…PFMDYIDMRL (62 aa)) folds into the HTH IS21-type domain. Positions 20 to 39 (IVDIATQIGCSERTVRRYLK) form a DNA-binding region, H-T-H motif. The region spanning 111 to 285 (FETQPRYQLQ…TPEQRFALEQ (175 aa)) is the Integrase catalytic domain.

Belongs to the transposase IS21/IS408/IS1162 family.

Functionally, involved in the transposition of the insertion sequence. This Pseudomonas aeruginosa protein is Transposase for insertion sequence element IS21 (istA).